The chain runs to 458 residues: Chromosomal replication initiator protein DnaA (458 aa).

The segment at 1–93 (MKTELSEVWQ…NVIEDPAAEP (93 aa)) is domain I, interacts with DnaA modulators. The tract at residues 94–119 (VDAPNVADLPAGTSAPAAEQNARLLG) is domain II. The tract at residues 120-336 (YINPKYTFET…GALTRVVAYA (217 aa)) is domain III, AAA+ region. Residues Gly-164, Gly-166, Lys-167, and Thr-168 each contribute to the ATP site. A domain IV, binds dsDNA region spans residues 337–458 (NMLKCPLTYD…EQLIARIRAE (122 aa)).

The protein belongs to the DnaA family. Oligomerizes as a right-handed, spiral filament on DNA at oriC.

The protein localises to the cytoplasm. Its function is as follows. Plays an essential role in the initiation and regulation of chromosomal replication. ATP-DnaA binds to the origin of replication (oriC) to initiate formation of the DNA replication initiation complex once per cell cycle. Binds the DnaA box (a 9 base pair repeat at the origin) and separates the double-stranded (ds)DNA. Forms a right-handed helical filament on oriC DNA; dsDNA binds to the exterior of the filament while single-stranded (ss)DNA is stabiized in the filament's interior. The ATP-DnaA-oriC complex binds and stabilizes one strand of the AT-rich DNA unwinding element (DUE), permitting loading of DNA polymerase. After initiation quickly degrades to an ADP-DnaA complex that is not apt for DNA replication. Binds acidic phospholipids. This Symbiobacterium thermophilum (strain DSM 24528 / JCM 14929 / IAM 14863 / T) protein is Chromosomal replication initiator protein DnaA.